The chain runs to 325 residues: Anthranilate phosphoribosyltransferase (325 aa).

Residues Gly74, 77–78 (GD), Thr82, 84–87 (NVST), 101–109 (KHGNVSITS), and Ser113 each bind 5-phospho-alpha-D-ribose 1-diphosphate. Anthranilate is bound at residue Gly74. Ser86 serves as a coordination point for Mg(2+). Asn104 provides a ligand contact to anthranilate. Arg159 contacts anthranilate. Residues Asp217 and Glu218 each coordinate Mg(2+).

The protein belongs to the anthranilate phosphoribosyltransferase family. As to quaternary structure, homodimer. Mg(2+) serves as cofactor.

The catalysed reaction is N-(5-phospho-beta-D-ribosyl)anthranilate + diphosphate = 5-phospho-alpha-D-ribose 1-diphosphate + anthranilate. Its pathway is amino-acid biosynthesis; L-tryptophan biosynthesis; L-tryptophan from chorismate: step 2/5. Its function is as follows. Catalyzes the transfer of the phosphoribosyl group of 5-phosphorylribose-1-pyrophosphate (PRPP) to anthranilate to yield N-(5'-phosphoribosyl)-anthranilate (PRA). In Thermococcus kodakarensis (strain ATCC BAA-918 / JCM 12380 / KOD1) (Pyrococcus kodakaraensis (strain KOD1)), this protein is Anthranilate phosphoribosyltransferase.